The sequence spans 397 residues: Purine ribonucleoside efflux pump NepI (397 aa).

Residues 1 to 21 lie on the Cytoplasmic side of the membrane; that stretch reads MNENIAEKFRADGVARPNWSA. The helical transmembrane segment at 22-42 threads the bilayer; the sequence is VFAVAFCVACLITVEFLPVSL. Residues 43–54 are Periplasmic-facing; the sequence is LTPMAQDLGISE. Residues 55 to 75 form a helical membrane-spanning segment; it reads GIAGQSVTVTAFVAMFSSLFI. At 76-85 the chain is on the cytoplasmic side; that stretch reads TQIIQATDRR. A helical membrane pass occupies residues 86–106; sequence YIVILFAVLLTASCLMVSFAN. Residue S107 is a topological domain, periplasmic. A helical membrane pass occupies residues 108–128; that stretch reads FTLLLLGRACLGLALGGFWAM. Over 129–147 the chain is Cytoplasmic; that stretch reads SASLTMRLVPARTVPKALS. Residues 148-168 traverse the membrane as a helical segment; the sequence is VIFGAVSIALVIAAPLGSFLG. The Periplasmic segment spans residues 169–175; sequence GIIGWRN. A helical membrane pass occupies residues 176-196; that stretch reads VFNAAAVMGVLCVIWVVKSLP. Topologically, residues 197-215 are cytoplasmic; that stretch reads SLPGEPSHQKQNMFSLLQR. The chain crosses the membrane as a helical span at residues 216 to 236; it reads PGVMAGMIAIFMSFAGQFAFF. Over 237–255 the chain is Periplasmic; the sequence is TYIRPVYMNLAGFDVDGLT. The chain crosses the membrane as a helical span at residues 256–276; the sequence is LVLLSFGIASFVGTSFSSYVL. At 277–281 the chain is on the cytoplasmic side; it reads KRSVK. The chain crosses the membrane as a helical span at residues 282–302; it reads LALAGAPLLLALSALTLIVWG. Residues 303 to 305 lie on the Periplasmic side of the membrane; that stretch reads SDK. Residues 306–326 traverse the membrane as a helical segment; that stretch reads TVAAVIAIIWGLAFALVPVGW. The Cytoplasmic segment spans residues 327 to 343; that stretch reads STWITRSLADQAEKAGS. Residues 344–364 form a helical membrane-spanning segment; sequence IQVAVIQLANTCGAAVGGYAL. Residues 365–366 lie on the Periplasmic side of the membrane; sequence DN. Residues 367–387 form a helical membrane-spanning segment; sequence FGLLSPLALSGCLMLLTALVV. At 388–397 the chain is on the cytoplasmic side; that stretch reads AAKVRITPMS.

The protein belongs to the major facilitator superfamily. DHA1 family. NepI (TC 2.A.1.2.26) subfamily.

The protein resides in the cell inner membrane. The catalysed reaction is inosine(in) + H(+)(out) = inosine(out) + H(+)(in). The enzyme catalyses guanosine(in) + H(+)(out) = guanosine(out) + H(+)(in). Its function is as follows. Involved in the efflux of purine ribonucleosides, such as inosine and guanosine. The polypeptide is Purine ribonucleoside efflux pump NepI (Salmonella enteritidis PT4 (strain P125109)).